Here is a 403-residue protein sequence, read N- to C-terminus: Aspartic endopeptidase PEP1 (403 aa).

The signal sequence occupies residues 1-20; sequence MVQISQIGAVLAVCSTLTVA. A propeptide spans 21 to 67 (activation peptide); sequence APTKGKARFNVPQVAVPMKAVHHPAVAYARALHKFGMKVPKAVSDAA. Residues 82-400 enclose the Peptidase A1 domain; sequence YVTQVTVGQG…DTEGPRIGFA (319 aa). D98 is an active-site residue. Residues N159 and N270 are each glycosylated (N-linked (GlcNAc...) asparagine). D293 is a catalytic residue. Cysteines 329 and 361 form a disulfide.

Belongs to the peptidase A1 family.

The protein resides in the secreted. The catalysed reaction is Hydrolysis of proteins with broad specificity. Generally favors hydrophobic residues in P1 and P1', but also accepts Lys in P1, which leads to activation of trypsinogen. Does not clot milk.. Functionally, secreted aspartic endopeptidase that allows assimilation of proteinaceous substrates. Can catalyze hydrolysis of the major structural proteins of basement membrane, elastin, collagen, and laminin. Thought to play a significant role in virulence. In terms of biological role, can catalyze hydrolysis of the major structural proteins of basement membrane, elastin, collagen, and laminin. Thought to play a significant role in virulence. In Trichophyton verrucosum (strain HKI 0517), this protein is Aspartic endopeptidase PEP1 (PEP1).